A 92-amino-acid polypeptide reads, in one-letter code: Integration host factor subunit beta (92 aa).

This sequence belongs to the bacterial histone-like protein family. As to quaternary structure, heterodimer of an alpha and a beta chain.

Its function is as follows. This protein is one of the two subunits of integration host factor, a specific DNA-binding protein that functions in genetic recombination as well as in transcriptional and translational control. This chain is Integration host factor subunit beta, found in Bartonella tribocorum (strain CIP 105476 / IBS 506).